The chain runs to 974 residues: MEDRSKYIAEESEDEEDEEQEEKEKKGGASTSTETEEDQEDIPSVIVPTINIREERLVDLAQTPAFLCLNELHTSGKLPGTRMAELKAKYTLLHDTVVSTQESEVQLLENAKRFTEQIQQQQVRLQEADDFPNVFTTEVSKLREQLLKYQNEYTAVQEREYHTQYRLNSLTEEKSLVLKEFEKIPKPGEIEKKTKLLKESTEELRKEVIQKRLEIKNLREDVVSKQKQLMKEQKELEELMDYQVGLKDDVVHHQSVPVQITKEIEKLTRRKIETEKKNVVLEFELKELSDSLKKLENKVSALAEERDDTIKEVEGKRTLLEVKEREYGQLLKLLELTKENEASSLAERGILDINLRNCLMDKQNYHDELSRKQREKERDFRNLKKTELLLKVSLDALSQAQALNQRLLLEMEAIPKEDLLLPEQRKELHKEVDLAKRNLAQQRSLSEAEAKLVEQQIAEENKLLKEQETMREVLFNLGRMTQIKMEEKEQKAKDFLKSQRRYCDIIKEIKSKKLEIRLYRKRKREIHRRLKEFAGLYDAIRNERNKFVNLLHKAYQKVNEIKERLKMSLNELEILRSSAVSQERKLQNAMLKHSNNVTIRESMQNDVCKITAKLQEMKEKKEAQLTSMDRLASMITVIEEEMVQLRKKYEKAVQRRNESGVQLIEREEEVCIFYEKMNIQDKVKLHQDIEIHILEEKIRFLKLKVAEKQRQICVTQKLVPIKKSLDANLAVVQIQFSQCADRIKALEKCFVNPDCQGRVRFIPGKDLTEEEMIKKLDMLELQLAKKEEKLLEKDFIYEQVSQLTNRLKTKTQACKMDTLLLAKKMNSYQKKIKDVTQEMMALVAELSMKQALTIELQKEVREKEEFIFSCSSRIEKGLPLNREIEKDWLKVLRDEEMYAFATAEKTREYIDTDYRQLPNGVYTTAEQRPNAYIPETDATLPLPKPYGALAPFKPSEPGANRRHIRKPIIKPIEI.

Positions 1–44 are disordered; it reads MEDRSKYIAEESEDEEDEEQEEKEKKGGASTSTETEEDQEDIPS. Positions 10-21 are enriched in acidic residues; that stretch reads EESEDEEDEEQE. At Ser12 the chain carries Phosphoserine. Coiled coils occupy residues 105-160, 195-340, 421-474, 512-660, 687-712, and 767-848; these read VQLL…QERE, KLLK…TKEN, LPEQ…REVL, KKLE…NESG, QDIE…QRQI, and LTEE…ELSM.

In terms of assembly, interacts with CCDC38 and CCDC42. Interacts with intraflagellar transport proteins IFT20 and IFT88.

Its subcellular location is the cytoplasm. It is found in the cytoskeleton. The protein localises to the microtubule organizing center. It localises to the centrosome. The protein resides in the centriole. Its subcellular location is the cell projection. It is found in the cilium. The protein localises to the flagellum. It localises to the flagellum axoneme. The protein resides in the cilium basal body. Its subcellular location is the midbody. Its function is as follows. Essential for sperm flagellum biogenesis and male fertility. The protein is Coiled-coil domain-containing protein 146 (Ccdc146) of Rattus norvegicus (Rat).